The primary structure comprises 170 residues: Photosystem I assembly protein Ycf3 (170 aa).

TPR repeat units follow at residues 35-68 (AFTY…EIDP), 72-105 (SYIL…NPFL), and 120-153 (GEQA…TPGN).

It belongs to the Ycf3 family.

It localises to the plastid. Its subcellular location is the chloroplast thylakoid membrane. In terms of biological role, essential for the assembly of the photosystem I (PSI) complex. May act as a chaperone-like factor to guide the assembly of the PSI subunits. In Zea mays (Maize), this protein is Photosystem I assembly protein Ycf3.